Here is a 345-residue protein sequence, read N- to C-terminus: NADH-quinone oxidoreductase subunit H (345 aa).

A run of 8 helical transmembrane segments spans residues 15–35 (MLLQ…FMVY), 82–102 (FVYF…FVVI), 115–135 (VGIL…IMGG), 161–181 (LGLI…TAIV), 190–210 (LLNW…VSAL), 240–262 (YLLF…SLLF), 278–298 (WWMV…KAIV), and 309–329 (IGWK…AILA).

This sequence belongs to the complex I subunit 1 family. NDH-1 is composed of at least 14 different subunits, Nqo1 to Nqo14. The complex has a L-shaped structure, with the hydrophobic arm (subunits Nqo7, Nqo8, Nqo10 to Nqo14) embedded in the inner membrane and the hydrophilic peripheral arm (subunits Nqo1 to Nqo6, Nqo9) protruding into the bacterial cytoplasm. The hydrophilic domain contains all the redox centers. NADH-quinone oxidoreductase forms a supercomplex with ubiquinol-cytochrome c reductase complex (complex III or cytochrome b-c1 complex) and cytochrome c oxidase (complex IV), which stabilizes the NADH-quinone oxidoreductase complex.

It localises to the cell inner membrane. The catalysed reaction is a quinone + NADH + 5 H(+)(in) = a quinol + NAD(+) + 4 H(+)(out). In terms of biological role, NDH-1 shuttles electrons from NADH, via FMN and iron-sulfur (Fe-S) centers, to quinones in the respiratory chain. The immediate electron acceptor for the enzyme in this species is believed to be ubiquinone. Couples the redox reaction to proton translocation (for every two electrons transferred, four hydrogen ions are translocated across the cytoplasmic membrane), and thus conserves the redox energy in a proton gradient. This subunit may bind ubiquinone. This chain is NADH-quinone oxidoreductase subunit H, found in Paracoccus denitrificans (strain Pd 1222).